The chain runs to 39 residues: Cytochrome b559 subunit beta (39 aa).

A helical membrane pass occupies residues 14–30; it reads WLAVHGLAVPTVFFLGA. H18 contributes to the heme binding site.

The protein belongs to the PsbE/PsbF family. Heterodimer of an alpha subunit and a beta subunit. PSII is composed of 1 copy each of membrane proteins PsbA, PsbB, PsbC, PsbD, PsbE, PsbF, PsbH, PsbI, PsbJ, PsbK, PsbL, PsbM, PsbT, PsbX, PsbY, PsbZ, Psb30/Ycf12, at least 3 peripheral proteins of the oxygen-evolving complex and a large number of cofactors. It forms dimeric complexes. Requires heme b as cofactor.

The protein resides in the plastid. It is found in the chloroplast thylakoid membrane. This b-type cytochrome is tightly associated with the reaction center of photosystem II (PSII). PSII is a light-driven water:plastoquinone oxidoreductase that uses light energy to abstract electrons from H(2)O, generating O(2) and a proton gradient subsequently used for ATP formation. It consists of a core antenna complex that captures photons, and an electron transfer chain that converts photonic excitation into a charge separation. The polypeptide is Cytochrome b559 subunit beta (Physcomitrium patens (Spreading-leaved earth moss)).